We begin with the raw amino-acid sequence, 607 residues long: Dolichyl-diphosphooligosaccharide--protein glycosyltransferase subunit 1 (607 aa).

The N-terminal stretch at 1–24 (MEVPTARLLLLLLLGAWAPAPESA) is a signal peptide. The Lumenal portion of the chain corresponds to 25 to 434 (SPEAPLLVNE…VVHYTFNKVL (410 aa)). An N6-acetyllysine modification is found at Lys187. The N-linked (GlcNAc...) asparagine glycan is linked to Asn299. The helical transmembrane segment at 435–455 (MLQEPLLVVAAFYILFFTVII) threads the bilayer. The Cytoplasmic segment spans residues 456 to 607 (YVRLDFSITK…TKIDHILDAL (152 aa)). Residue Lys538 is modified to N6-acetyllysine; alternate. Lys538 participates in a covalent cross-link: Glycyl lysine isopeptide (Lys-Gly) (interchain with G-Cter in SUMO2); alternate.

Belongs to the OST1 family. In terms of assembly, component of the oligosaccharyltransferase (OST) complex. OST exists in two different complex forms which contain common core subunits RPN1, RPN2, OST48, OST4, DAD1 and TMEM258, either STT3A or STT3B as catalytic subunits, and form-specific accessory subunits. STT3A complex assembly occurs through the formation of 3 subcomplexes. Subcomplex 1 contains RPN1 and TMEM258, subcomplex 2 contains the STT3A-specific subunits STT3A, DC2/OSTC, and KCP2 as well as the core subunit OST4, and subcomplex 3 contains RPN2, DAD1, and OST48. The STT3A complex can form stable complexes with the Sec61 complex or with both the Sec61 and TRAP complexes. Interacts with TMEM35A/NACHO. Ubiquitinated by the ECS(ASB11) complex. In terms of processing, ufmylated by UFL1 in response to endoplasmic reticulum stress, promoting reticulophagy of endoplasmic reticulum sheets.

Its subcellular location is the endoplasmic reticulum membrane. The protein operates within protein modification; protein glycosylation. Its function is as follows. Subunit of the oligosaccharyl transferase (OST) complex that catalyzes the initial transfer of a defined glycan (Glc(3)Man(9)GlcNAc(2) in eukaryotes) from the lipid carrier dolichol-pyrophosphate to an asparagine residue within an Asn-X-Ser/Thr consensus motif in nascent polypeptide chains, the first step in protein N-glycosylation. N-glycosylation occurs cotranslationally and the complex associates with the Sec61 complex at the channel-forming translocon complex that mediates protein translocation across the endoplasmic reticulum (ER). All subunits are required for a maximal enzyme activity. The sequence is that of Dolichyl-diphosphooligosaccharide--protein glycosyltransferase subunit 1 from Canis lupus familiaris (Dog).